Here is a 330-residue protein sequence, read N- to C-terminus: DNA primase small subunit PriS (330 aa).

Residues Asp-101 and Asp-103 contribute to the active site. Cys-116, Cys-119, Cys-128, and Asp-131 together coordinate Zn(2+). The active site involves Asp-235.

This sequence belongs to the eukaryotic-type primase small subunit family. As to quaternary structure, heterodimer of a small subunit (PriS) and a large subunit (PriL). The cofactor is Mg(2+). Requires Mn(2+) as cofactor.

In terms of biological role, catalytic subunit of DNA primase, an RNA polymerase that catalyzes the synthesis of short RNA molecules used as primers for DNA polymerase during DNA replication. The small subunit contains the primase catalytic core and has DNA synthesis activity on its own. Binding to the large subunit stabilizes and modulates the activity, increasing the rate of DNA synthesis while decreasing the length of the DNA fragments, and conferring RNA synthesis capability. The DNA polymerase activity may enable DNA primase to also catalyze primer extension after primer synthesis. May also play a role in DNA repair. This chain is DNA primase small subunit PriS, found in Saccharolobus islandicus (strain Y.N.15.51 / Yellowstone #2) (Sulfolobus islandicus).